The sequence spans 253 residues: Coenzyme F420:L-glutamate ligase (253 aa).

GTP-binding positions include 9 to 12 (LPEI), 38 to 39 (ST), and Lys-43. Asp-113 lines the a divalent metal cation pocket. Asn-116 provides a ligand contact to GTP. Asp-148, Thr-149, and Glu-206 together coordinate a divalent metal cation. A GTP-binding site is contributed by 204–211 (AGEGDDGT).

This sequence belongs to the CofE family. Homodimer. It depends on Mg(2+) as a cofactor. The cofactor is Mn(2+). K(+) is required as a cofactor.

It carries out the reaction oxidized coenzyme F420-0 + GTP + L-glutamate = oxidized coenzyme F420-1 + GDP + phosphate + H(+). The enzyme catalyses oxidized coenzyme F420-1 + GTP + L-glutamate = oxidized coenzyme F420-2 + GDP + phosphate + H(+). It participates in cofactor biosynthesis; coenzyme F420 biosynthesis. In terms of biological role, catalyzes the GTP-dependent successive addition of two or more gamma-linked L-glutamates to the L-lactyl phosphodiester of 7,8-didemethyl-8-hydroxy-5-deazariboflavin (F420-0) to form coenzyme F420-0-glutamyl-glutamate (F420-2) or polyglutamated F420 derivatives. The protein is Coenzyme F420:L-glutamate ligase of Natronomonas pharaonis (strain ATCC 35678 / DSM 2160 / CIP 103997 / JCM 8858 / NBRC 14720 / NCIMB 2260 / Gabara) (Halobacterium pharaonis).